A 415-amino-acid chain; its full sequence is Gamma-glutamyl phosphate reductase (415 aa).

It belongs to the gamma-glutamyl phosphate reductase family.

It localises to the cytoplasm. The catalysed reaction is L-glutamate 5-semialdehyde + phosphate + NADP(+) = L-glutamyl 5-phosphate + NADPH + H(+). The protein operates within amino-acid biosynthesis; L-proline biosynthesis; L-glutamate 5-semialdehyde from L-glutamate: step 2/2. Functionally, catalyzes the NADPH-dependent reduction of L-glutamate 5-phosphate into L-glutamate 5-semialdehyde and phosphate. The product spontaneously undergoes cyclization to form 1-pyrroline-5-carboxylate. This Thermotoga maritima (strain ATCC 43589 / DSM 3109 / JCM 10099 / NBRC 100826 / MSB8) protein is Gamma-glutamyl phosphate reductase.